The primary structure comprises 179 residues: Large ribosomal subunit protein uL5 (179 aa).

This sequence belongs to the universal ribosomal protein uL5 family. As to quaternary structure, part of the 50S ribosomal subunit; part of the 5S rRNA/L5/L18/L25 subcomplex. Contacts the 5S rRNA and the P site tRNA. Forms a bridge to the 30S subunit in the 70S ribosome.

In terms of biological role, this is one of the proteins that bind and probably mediate the attachment of the 5S RNA into the large ribosomal subunit, where it forms part of the central protuberance. In the 70S ribosome it contacts protein S13 of the 30S subunit (bridge B1b), connecting the 2 subunits; this bridge is implicated in subunit movement. Contacts the P site tRNA; the 5S rRNA and some of its associated proteins might help stabilize positioning of ribosome-bound tRNAs. This Aeromonas salmonicida (strain A449) protein is Large ribosomal subunit protein uL5.